A 184-amino-acid polypeptide reads, in one-letter code: ATP synthase subunit b, chloroplastic (184 aa).

Residues 27-49 (LATNLINLSVVLGVLIFFGKGVL) form a helical membrane-spanning segment.

It belongs to the ATPase B chain family. F-type ATPases have 2 components, F(1) - the catalytic core - and F(0) - the membrane proton channel. F(1) has five subunits: alpha(3), beta(3), gamma(1), delta(1), epsilon(1). F(0) has four main subunits: a(1), b(1), b'(1) and c(10-14). The alpha and beta chains form an alternating ring which encloses part of the gamma chain. F(1) is attached to F(0) by a central stalk formed by the gamma and epsilon chains, while a peripheral stalk is formed by the delta, b and b' chains.

The protein resides in the plastid. Its subcellular location is the chloroplast thylakoid membrane. In terms of biological role, f(1)F(0) ATP synthase produces ATP from ADP in the presence of a proton or sodium gradient. F-type ATPases consist of two structural domains, F(1) containing the extramembraneous catalytic core and F(0) containing the membrane proton channel, linked together by a central stalk and a peripheral stalk. During catalysis, ATP synthesis in the catalytic domain of F(1) is coupled via a rotary mechanism of the central stalk subunits to proton translocation. Component of the F(0) channel, it forms part of the peripheral stalk, linking F(1) to F(0). The sequence is that of ATP synthase subunit b, chloroplastic from Helianthus annuus (Common sunflower).